Consider the following 107-residue polypeptide: Iron-sulfur cluster assembly protein CyaY (107 aa).

The protein belongs to the frataxin family.

Functionally, involved in iron-sulfur (Fe-S) cluster assembly. May act as a regulator of Fe-S biogenesis. This Enterobacter sp. (strain 638) protein is Iron-sulfur cluster assembly protein CyaY.